The sequence spans 251 residues: Coproheme decarboxylase (251 aa).

Fe-coproporphyrin III-binding positions include R133, 147-151, H174, Q187, and S225; that span reads YPMSK. Y147 is an active-site residue.

Belongs to the ChdC family. Type 1 subfamily. In terms of assembly, homopentamer. Homohexamer in solution. It depends on Fe-coproporphyrin III as a cofactor.

It catalyses the reaction Fe-coproporphyrin III + 2 H2O2 + 2 H(+) = heme b + 2 CO2 + 4 H2O. The catalysed reaction is Fe-coproporphyrin III + H2O2 + H(+) = harderoheme III + CO2 + 2 H2O. It carries out the reaction harderoheme III + H2O2 + H(+) = heme b + CO2 + 2 H2O. It functions in the pathway porphyrin-containing compound metabolism; protoheme biosynthesis. Involved in coproporphyrin-dependent heme b biosynthesis. Catalyzes the decarboxylation of Fe-coproporphyrin III (coproheme) to heme b (protoheme IX), the last step of the pathway. The reaction occurs in a stepwise manner with a three-propionate intermediate. In Listeria monocytogenes serovar 1/2a (strain ATCC BAA-679 / EGD-e), this protein is Coproheme decarboxylase.